We begin with the raw amino-acid sequence, 78 residues long: UPF0349 protein YuzB (78 aa).

It belongs to the UPF0349 family.

This is UPF0349 protein YuzB (yuzB) from Bacillus subtilis (strain 168).